The chain runs to 310 residues: Methionyl-tRNA formyltransferase (310 aa).

110-113 (SVLP) contributes to the (6S)-5,6,7,8-tetrahydrofolate binding site. Residues 283–310 (TVQPPGKKSMNAADWARGARAEDIRRAR) form a disordered region. Basic and acidic residues predominate over residues 299–310 (RGARAEDIRRAR).

This sequence belongs to the Fmt family.

The enzyme catalyses L-methionyl-tRNA(fMet) + (6R)-10-formyltetrahydrofolate = N-formyl-L-methionyl-tRNA(fMet) + (6S)-5,6,7,8-tetrahydrofolate + H(+). Attaches a formyl group to the free amino group of methionyl-tRNA(fMet). The formyl group appears to play a dual role in the initiator identity of N-formylmethionyl-tRNA by promoting its recognition by IF2 and preventing the misappropriation of this tRNA by the elongation apparatus. In Mycolicibacterium gilvum (strain PYR-GCK) (Mycobacterium gilvum (strain PYR-GCK)), this protein is Methionyl-tRNA formyltransferase.